The sequence spans 349 residues: Ferredoxin--NADP reductase 1 (349 aa).

FAD is bound by residues Glu36, Lys44, Tyr48, Val88, Leu123, Asp290, and Ser331.

This sequence belongs to the ferredoxin--NADP reductase type 2 family. As to quaternary structure, homodimer. Requires FAD as cofactor.

It carries out the reaction 2 reduced [2Fe-2S]-[ferredoxin] + NADP(+) + H(+) = 2 oxidized [2Fe-2S]-[ferredoxin] + NADPH. This Bacillus cereus (strain ATCC 10987 / NRS 248) protein is Ferredoxin--NADP reductase 1.